Reading from the N-terminus, the 183-residue chain is Large ribosomal subunit protein mL43 (183 aa).

Disordered regions lie at residues 120 to 144 (HTDN…TGCG) and 162 to 183 (PGAL…AQAE). Positions 122 to 139 (DNPSIQGQWTPSPTNGLP) are enriched in polar residues. Residues 162–172 (PGALDRERDRI) are compositionally biased toward basic and acidic residues.

It belongs to the mitochondrion-specific ribosomal protein mL43 family. Component of the mitochondrial ribosome large subunit (39S) which comprises a 16S rRNA and about 50 distinct proteins. Ubiquitous with the highest levels in the liver, heart and kidneys. The skeletal muscle, brain and testis showed lower but detectable expression. Expression is coregulated with TWNK.

The protein resides in the mitochondrion. The protein is Large ribosomal subunit protein mL43 (Mrpl43) of Mus musculus (Mouse).